We begin with the raw amino-acid sequence, 125 residues long: NADH-ubiquinone oxidoreductase chain 1 (125 aa).

3 consecutive transmembrane segments (helical) span residues 5–25 (IFAFFELITFLVPVLLAVAFL), 74–94 (YLFFASPVLFLTLALLLWNFM), and 105–125 (LSLLLVLGLSSLSVYAILGSG).

It belongs to the complex I subunit 1 family.

It localises to the mitochondrion inner membrane. It catalyses the reaction a ubiquinone + NADH + 5 H(+)(in) = a ubiquinol + NAD(+) + 4 H(+)(out). Its function is as follows. Core subunit of the mitochondrial membrane respiratory chain NADH dehydrogenase (Complex I) that is believed to belong to the minimal assembly required for catalysis. Complex I functions in the transfer of electrons from NADH to the respiratory chain. The immediate electron acceptor for the enzyme is believed to be ubiquinone. This chain is NADH-ubiquinone oxidoreductase chain 1 (ND1), found in Arbacia lixula (Black urchin).